The following is a 1449-amino-acid chain: Gag-Pol polyprotein (1449 aa).

A lipid anchor (N-myristoyl glycine; by host) is attached at Gly-2. The Nuclear export signal signature appears at 16–22 (LEKVRLR). The Nuclear localization signal motif lies at 26–32 (KKKYMLK). The segment at 215–237 (DLQHPQPGPLPAGQLREPRGSDI) is disordered. 2 consecutive CCHC-type zinc fingers follow at residues 392 to 409 (IKCW…QCRA) and 413 to 430 (QGCW…KCPE). The disordered stretch occupies residues 442-494 (GKEAPQFPHGPDASGADTNCSPRGSSCGSTEELHEDGQKAEGEQRETLQGGDR). Residues 457 to 470 (ADTNCSPRGSSCGS) are compositionally biased toward polar residues. Basic and acidic residues predominate over residues 472-487 (EELHEDGQKAEGEQRE). Residues 518–587 (VEVLLDTGAD…TPINIFGRNL (70 aa)) enclose the Peptidase A2 domain. Asp-523 acts as the For protease activity; shared with dimeric partner in catalysis. A Reverse transcriptase domain is found at 641-831 (DGQLEEAPPT…PPFQWMGYEL (191 aa)). 3 residues coordinate Mg(2+): Asp-707, Asp-782, and Asp-783. The segment at 824–832 (FQWMGYELW) is RT 'primer grip'. Residues 994–1010 (WEQWWTDYWQVTWIPDW) carry the Tryptophan repeat motif motif. One can recognise an RNase H type-1 domain in the interval 1030-1153 (IQGAETFYVD…VDHLVSQGIR (124 aa)). Positions 1039, 1074, 1094, and 1145 each coordinate Mg(2+). Residues 1159-1200 (KKIEPAQEEHEKYHSNVKELVFKFGLPRLVAKQIVDTCDKCH) form an Integrase-type zinc finger. His-1168, His-1172, Cys-1196, and Cys-1199 together coordinate Zn(2+). Residues 1210 to 1360 (VNAELGTWQM…TPAERLVNMI (151 aa)) form the Integrase catalytic domain. Positions 1220 and 1272 each coordinate Mg(2+). Residues 1379 to 1426 (FRVYYREGRDQLWKGPGELLWKGEGAVILKVGTEIKVVPRRKAKIIKD) constitute a DNA-binding region (integrase-type).

Homotrimer. Interacts with gp41 (via C-terminus). In terms of assembly, homodimer. The active site consists of two apposed aspartic acid residues. As to quaternary structure, heterodimer of p66 RT and p51 RT (RT p66/p51). Heterodimerization of RT is essential for DNA polymerase activity. Despite the sequence identities, p66 RT and p51 RT have distinct folding. Homotetramer; may further associate as a homohexadecamer. It depends on Mg(2+) as a cofactor. Specific enzymatic cleavages by the viral protease yield mature proteins. The protease is released by autocatalytic cleavage. The polyprotein is cleaved during and after budding, this process is termed maturation. Proteolytic cleavage of p66 RT removes the RNase H domain to yield the p51 RT subunit. Post-translationally, capsid protein p24 is phosphorylated.

It localises to the virion. It is found in the host nucleus. Its subcellular location is the host cytoplasm. The protein resides in the host cell membrane. The catalysed reaction is Specific for a P1 residue that is hydrophobic, and P1' variable, but often Pro.. It carries out the reaction Endohydrolysis of RNA in RNA/DNA hybrids. Three different cleavage modes: 1. sequence-specific internal cleavage of RNA. Human immunodeficiency virus type 1 and Moloney murine leukemia virus enzymes prefer to cleave the RNA strand one nucleotide away from the RNA-DNA junction. 2. RNA 5'-end directed cleavage 13-19 nucleotides from the RNA end. 3. DNA 3'-end directed cleavage 15-20 nucleotides away from the primer terminus.. The enzyme catalyses 3'-end directed exonucleolytic cleavage of viral RNA-DNA hybrid.. It catalyses the reaction DNA(n) + a 2'-deoxyribonucleoside 5'-triphosphate = DNA(n+1) + diphosphate. Its activity is regulated as follows. The viral protease is inhibited by many synthetic protease inhibitors (PIs), such as amprenavir, atazanavir, indinavir, loprinavir, nelfinavir, ritonavir and saquinavir. RT can be inhibited either by nucleoside RT inhibitors (NRTIs) or by non nucleoside RT inhibitors (NNRTIs). NRTIs act as chain terminators, whereas NNRTIs inhibit DNA polymerization by binding a small hydrophobic pocket near the RT active site and inducing an allosteric change in this region. Classical NRTIs are abacavir, adefovir (PMEA), didanosine (ddI), lamivudine (3TC), stavudine (d4T), tenofovir (PMPA), zalcitabine (ddC), and zidovudine (AZT). Classical NNRTIs are atevirdine (BHAP U-87201E), delavirdine, efavirenz (DMP-266), emivirine (I-EBU), and nevirapine (BI-RG-587). The tritherapies used as a basic effective treatment of AIDS associate two NRTIs and one NNRTI. Use of protease inhibitors in tritherapy regimens permit more ambitious therapeutic strategies. Its function is as follows. Gag-Pol polyprotein and Gag polyprotein may regulate their own translation, by the binding genomic RNA in the 5'-UTR. At low concentration, Gag-Pol and Gag would promote translation, whereas at high concentration, the polyproteins encapsidate genomic RNA and then shut off translation. Matrix protein p17 has two main functions: in infected cell, it targets Gag and Gag-pol polyproteins to the plasma membrane via a multipartite membrane-binding signal, that includes its myristointegration complex. The myristoylation signal and the NLS exert conflicting influences its subcellular localization. The key regulation of these motifs might be phosphorylation of a portion of MA molecules on the C-terminal tyrosine at the time of virus maturation, by virion-associated cellular tyrosine kinase. Implicated in the release from host cell mediated by Vpu. In terms of biological role, capsid protein p24 forms the conical core that encapsulates the genomic RNA-nucleocapsid complex in the virion. The core is constituted by capsid protein hexamer subunits. The core is disassembled soon after virion entry. Interaction with host PPIA/CYPA protects the virus from restriction by host TRIM5-alpha and from an unknown antiviral activity in host cells. This capsid restriction by TRIM5 is one of the factors which restricts SIV to the simian species. Functionally, nucleocapsid protein p7 encapsulates and protects viral dimeric unspliced (genomic) RNA. Binds these RNAs through its zinc fingers. Facilitates rearangement of nucleic acid secondary structure during retrotranscription of genomic RNA. This capability is referred to as nucleic acid chaperone activity. Its function is as follows. The aspartyl protease mediates proteolytic cleavages of Gag and Gag-Pol polyproteins during or shortly after the release of the virion from the plasma membrane. Cleavages take place as an ordered, step-wise cascade to yield mature proteins. This process is called maturation. Displays maximal activity during the budding process just prior to particle release from the cell. Also cleaves Nef and Vif, probably concomitantly with viral structural proteins on maturation of virus particles. Hydrolyzes host EIF4GI and PABP1 in order to shut off the capped cellular mRNA translation. The resulting inhibition of cellular protein synthesis serves to ensure maximal viral gene expression and to evade host immune response. Reverse transcriptase/ribonuclease H (RT) is a multifunctional enzyme that converts the viral dimeric RNA genome into dsDNA in the cytoplasm, shortly after virus entry into the cell. This enzyme displays a DNA polymerase activity that can copy either DNA or RNA templates, and a ribonuclease H (RNase H) activity that cleaves the RNA strand of RNA-DNA heteroduplexes in a partially processive 3' to 5' endonucleasic mode. Conversion of viral genomic RNA into dsDNA requires many steps. A tRNA binds to the primer-binding site (PBS) situated at the 5'-end of the viral RNA. RT uses the 3' end of the tRNA primer to perform a short round of RNA-dependent minus-strand DNA synthesis. The reading proceeds through the U5 region and ends after the repeated (R) region which is present at both ends of viral RNA. The portion of the RNA-DNA heteroduplex is digested by the RNase H, resulting in a ssDNA product attached to the tRNA primer. This ssDNA/tRNA hybridizes with the identical R region situated at the 3' end of viral RNA. This template exchange, known as minus-strand DNA strong stop transfer, can be either intra- or intermolecular. RT uses the 3' end of this newly synthesized short ssDNA to perform the RNA-dependent minus-strand DNA synthesis of the whole template. RNase H digests the RNA template except for two polypurine tracts (PPTs) situated at the 5'-end and near the center of the genome. It is not clear if both polymerase and RNase H activities are simultaneous. RNase H can probably proceed both in a polymerase-dependent (RNA cut into small fragments by the same RT performing DNA synthesis) and a polymerase-independent mode (cleavage of remaining RNA fragments by free RTs). Secondly, RT performs DNA-directed plus-strand DNA synthesis using the PPTs that have not been removed by RNase H as primers. PPTs and tRNA primers are then removed by RNase H. The 3' and 5' ssDNA PBS regions hybridize to form a circular dsDNA intermediate. Strand displacement synthesis by RT to the PBS and PPT ends produces a blunt ended, linear dsDNA copy of the viral genome that includes long terminal repeats (LTRs) at both ends. In terms of biological role, integrase catalyzes viral DNA integration into the host chromosome, by performing a series of DNA cutting and joining reactions. This enzyme activity takes place after virion entry into a cell and reverse transcription of the RNA genome in dsDNA. The first step in the integration process is 3' processing. This step requires a complex comprising the viral genome, matrix protein, Vpr and integrase. This complex is called the pre-integration complex (PIC). The integrase protein removes 2 nucleotides from each 3' end of the viral DNA, leaving recessed CA OH's at the 3' ends. In the second step, the PIC enters cell nucleus. This process is mediated through integrase and Vpr proteins, and allows the virus to infect a non dividing cell. This ability to enter the nucleus is specific of lentiviruses, other retroviruses cannot and rely on cell division to access cell chromosomes. In the third step, termed strand transfer, the integrase protein joins the previously processed 3' ends to the 5' ends of strands of target cellular DNA at the site of integration. The 5'-ends are produced by integrase-catalyzed staggered cuts, 5 bp apart. A Y-shaped, gapped, recombination intermediate results, with the 5'-ends of the viral DNA strands and the 3' ends of target DNA strands remaining unjoined, flanking a gap of 5 bp. The last step is viral DNA integration into host chromosome. This involves host DNA repair synthesis in which the 5 bp gaps between the unjoined strands are filled in and then ligated. Since this process occurs at both cuts flanking the SIV genome, a 5 bp duplication of host DNA is produced at the ends of SIV integration. Alternatively, Integrase may catalyze the excision of viral DNA just after strand transfer, this is termed disintegration. The protein is Gag-Pol polyprotein (gag-pol) of Cercopithecidae (Old World monkeys).